The primary structure comprises 861 residues: Probable linoleate 9S-lipoxygenase 8 (861 aa).

A PLAT domain is found at 33 to 160; sequence FTDLASSLTG…NYKSDRIFFA (128 aa). The Lipoxygenase domain occupies 163 to 861; the sequence is PYLPSETPEL…GKGIPNSVSI (699 aa). Residues 220–245 form a disordered region; that stretch reads TLGGSAEYPYPRRGRTGRPPTRTDPK. The Fe cation site is built by His522, His527, His713, Asn717, and Ile861.

It belongs to the lipoxygenase family. Monomer. The cofactor is Fe cation.

The protein localises to the cytoplasm. It catalyses the reaction (9Z,12Z)-octadecadienoate + O2 = (9S)-hydroperoxy-(10E,12Z)-octadecadienoate. The protein operates within lipid metabolism; oxylipin biosynthesis. Plant lipoxygenases may be involved in a number of diverse aspects of plant physiology including growth and development, pest resistance, and senescence or responses to wounding. Catalyzes the hydroperoxidation of lipids containing a cis,cis-1,4-pentadiene structure. In Solanum tuberosum (Potato), this protein is Probable linoleate 9S-lipoxygenase 8 (LOX1.8).